The sequence spans 829 residues: Venom phosphodiesterase CdcPDE (829 aa).

2 SMB domains span residues 8 to 51 and 52 to 96; these read PQVS…VLPT and QSWS…GETS. Cystine bridges form between Cys-12-Cys-16, Cys-12-Cys-29, Cys-16-Cys-47, Cys-27-Cys-29, Cys-27-Cys-40, Cys-33-Cys-39, Cys-40-Cys-47, Cys-56-Cys-61, Cys-56-Cys-73, Cys-61-Cys-91, Cys-71-Cys-73, Cys-71-Cys-84, Cys-77-Cys-83, Cys-84-Cys-91, Cys-102-Cys-148, and Cys-110-Cys-322. Asn-17 carries an N-linked (GlcNAc...) asparagine glycan. Positions 36-38 match the Cell attachment site motif; sequence RQA. A divalent metal cation contacts are provided by Asp-125 and Thr-163. The AMP-threonine intermediate role is filled by Thr-163. Asn-194 and Asn-237 each carry an N-linked (GlcNAc...) asparagine glycan. AMP is bound at residue Lys-249. Residues Asp-283, His-287, Asp-330, and His-331 each coordinate a divalent metal cation. Residue His-287 participates in AMP binding. Intrachain disulfides connect Cys-338/Cys-435, Cys-386/Cys-771, Cys-519/Cys-577, Cys-532/Cys-632, Cys-534/Cys-617, and Cys-740/Cys-750. Asn-383 carries N-linked (GlcNAc...) asparagine glycosylation. His-440 is a binding site for a divalent metal cation. N-linked (GlcNAc...) asparagine glycans are attached at residues Asn-572 and Asn-652.

This sequence belongs to the nucleotide pyrophosphatase/phosphodiesterase family. Monomer. A divalent metal cation is required as a cofactor. Post-translationally, N-glycosylated. Glycosylation counts for an increased mass of ~9%. Contains 16 disulfide bonds. As to expression, expressed by venom gland.

The protein resides in the secreted. The enzyme catalyses ADP + H2O = AMP + phosphate + H(+). Hydrolyzes ADP with high activity. Shows weak or no activity on 5'-AMP, 5'-GMP, 3'-AMP, ATP, cAMP, and cGMP. Is devoid of monophosphatase and proteinase activities. Inhibits ADP-induced platelet aggregation and is cytotoxic to human keratinocytes. Kinetic parameters indicated a higher affinity for the substrate bis(p-nitrophenyl) phosphate compared to others snake venom PDEs. Is recognized by the crotalid antivenom produced by the Instituto Butantan. In Crotalus durissus collilineatus (Brazilian rattlesnake), this protein is Venom phosphodiesterase CdcPDE.